Here is a 140-residue protein sequence, read N- to C-terminus: Small ribosomal subunit protein uS12 (140 aa).

Aspartate 103 carries the 3-methylthioaspartic acid modification. The tract at residues 120 to 140 (GVQKRMQARSKYGAKRPKKGK) is disordered. Residues 125–140 (MQARSKYGAKRPKKGK) are compositionally biased toward basic residues.

The protein belongs to the universal ribosomal protein uS12 family. Part of the 30S ribosomal subunit. Contacts proteins S8 and S17. May interact with IF1 in the 30S initiation complex.

With S4 and S5 plays an important role in translational accuracy. Its function is as follows. Interacts with and stabilizes bases of the 16S rRNA that are involved in tRNA selection in the A site and with the mRNA backbone. Located at the interface of the 30S and 50S subunits, it traverses the body of the 30S subunit contacting proteins on the other side and probably holding the rRNA structure together. The combined cluster of proteins S8, S12 and S17 appears to hold together the shoulder and platform of the 30S subunit. The chain is Small ribosomal subunit protein uS12 from Desulfitobacterium hafniense (strain Y51).